Consider the following 98-residue polypeptide: YcgL domain-containing protein Ping_1076 (98 aa).

A YcgL domain is found at 1 to 85; it reads MLCAVYKSIR…PPVNHLQEHK (85 aa). The interval 75–98 is disordered; sequence PPPVNHLQEHKDWKKKRQENKNEI.

The sequence is that of YcgL domain-containing protein Ping_1076 from Psychromonas ingrahamii (strain DSM 17664 / CCUG 51855 / 37).